The sequence spans 569 residues: Membrane protein insertase YidC (569 aa).

The helical transmembrane segment at 6 to 26 threads the bilayer; sequence FVLFLIFATSLLFLWDAWQKE. 2 stretches are compositionally biased toward polar residues: residues 32-52 and 62-74; these read QGPKTAVQGTETQANTGTAGT and LASSVPQRGSTAE. The segment at 32–81 is disordered; it reads QGPKTAVQGTETQANTGTAGTAETPVPGDQLASSVPQRGSTAENGAPVRA. 5 helical membrane-spanning segments follow: residues 348–368, 375–395, 442–462, 479–499, and 519–539; these read VVDYGWLTVIGAPLFWLLSLF, WGVAIILLTMSVKLAFFPLSA, GGCLPILVQIPVFISLYWVLL, LSAPDPYYVLPVIMGISMFLQ, and PLAFSVFFFFFPAGLVLYSLV.

This sequence belongs to the OXA1/ALB3/YidC family. Type 1 subfamily. As to quaternary structure, interacts with the Sec translocase complex via SecD. Specifically interacts with transmembrane segments of nascent integral membrane proteins during membrane integration.

It localises to the cell inner membrane. In terms of biological role, required for the insertion and/or proper folding and/or complex formation of integral membrane proteins into the membrane. Involved in integration of membrane proteins that insert both dependently and independently of the Sec translocase complex, as well as at least some lipoproteins. Aids folding of multispanning membrane proteins. The chain is Membrane protein insertase YidC from Nitrosospira multiformis (strain ATCC 25196 / NCIMB 11849 / C 71).